A 427-amino-acid polypeptide reads, in one-letter code: N-myc proto-oncogene protein (427 aa).

4 disordered regions span residues 45–79 (FELL…SVGL), 144–173 (EKLQ…SGRA), 195–255 (AAEG…STNK), and 297–349 (APSP…RNHN). 2 stretches are compositionally biased toward pro residues: residues 49 to 61 (PTPP…PAPG) and 152 to 167 (AAPP…PPVP). Residues 210–221 (RASSSSSSSGDD) show a composition bias toward low complexity. A compositionally biased stretch (acidic residues) spans 222 to 242 (TLSDSEDDEDEEEEDEEEEID). Phosphoserine; by CK2 occurs at positions 224 and 226. A bHLH domain is found at 343–396 (ERRRNHNILERQRANDLRSSFLTLRDHVLSELVQNEKAAKVVILKKATEYVHSL). Residues 396-417 (LQAEEQKLLLEKEKLQARQEQL) form a leucine-zipper region.

As to quaternary structure, efficient DNA binding requires dimerization with another bHLH protein. Binds DNA as a heterodimer with MAX.

It is found in the nucleus. The chain is N-myc proto-oncogene protein (MYCN) from Serinus canaria (Island canary).